The chain runs to 414 residues: 3-ketoacyl-CoA thiolase, peroxisomal (414 aa).

The N-terminal 9 residues, Met1–Thr9, are a transit peptide targeting the peroxisome. Residues Met1–Thr9 form a PTS2-type peroxisomal targeting signal region. Cys115 (acyl-thioester intermediate) is an active-site residue. Catalysis depends on proton acceptor residues His370 and Cys400.

The protein belongs to the thiolase-like superfamily. Thiolase family. In terms of assembly, homodimer. Interacts (via PTS2-type peroxisomal targeting signal region) with PEX7; leading to its translocation into peroxisomes.

Its subcellular location is the peroxisome. It catalyses the reaction an acyl-CoA + acetyl-CoA = a 3-oxoacyl-CoA + CoA. It functions in the pathway lipid metabolism; fatty acid metabolism. Its function is as follows. Responsible for the thiolytic cleavage of straight chain 3-keto fatty acyl-CoAs (3-oxoacyl-CoAs). This chain is 3-ketoacyl-CoA thiolase, peroxisomal (POT1), found in Yarrowia lipolytica (strain CLIB 122 / E 150) (Yeast).